The primary structure comprises 217 residues: MQDTTLHIRHLGKQDYESVWHAMQHYTDTRNSESPDELWIVEHPPVFTQGQAGKSEHILNAGDIPVIQVDRGGQVTYHGPGQLVVYPLIDIKRSKIGVRQLVTHIEQSIINMLAKYDIQAYAKADAPGVYVNERKIASLGLRIRRGCSFHGLALNVDMDLAPFRRINPCGYAGLEMVQSKALGGPQTVTEAGEQLTITFSQLLGYQHLVHHQGLAAS.

The region spanning 32 to 207 is the BPL/LPL catalytic domain; the sequence is SESPDELWIV…TFSQLLGYQH (176 aa). Substrate contacts are provided by residues 71–78, 138–140, and 151–153; these read RGGQVTYH, SLG, and GLA. Cys169 functions as the Acyl-thioester intermediate in the catalytic mechanism.

This sequence belongs to the LipB family.

Its subcellular location is the cytoplasm. It catalyses the reaction octanoyl-[ACP] + L-lysyl-[protein] = N(6)-octanoyl-L-lysyl-[protein] + holo-[ACP] + H(+). The protein operates within protein modification; protein lipoylation via endogenous pathway; protein N(6)-(lipoyl)lysine from octanoyl-[acyl-carrier-protein]: step 1/2. Catalyzes the transfer of endogenously produced octanoic acid from octanoyl-acyl-carrier-protein onto the lipoyl domains of lipoate-dependent enzymes. Lipoyl-ACP can also act as a substrate although octanoyl-ACP is likely to be the physiological substrate. This chain is Octanoyltransferase, found in Shewanella sp. (strain W3-18-1).